The chain runs to 544 residues: L-aspartate oxidase (544 aa).

FAD is bound by residues 17-20 (SGGA), K39, 46-53 (STFYAQGG), and D221. The active-site Proton donor/acceptor is R288. FAD contacts are provided by residues E373 and 389–390 (SL).

Belongs to the FAD-dependent oxidoreductase 2 family. NadB subfamily. FAD is required as a cofactor.

It localises to the cytoplasm. The enzyme catalyses L-aspartate + O2 = iminosuccinate + H2O2. Its pathway is cofactor biosynthesis; NAD(+) biosynthesis; iminoaspartate from L-aspartate (oxidase route): step 1/1. Functionally, catalyzes the oxidation of L-aspartate to iminoaspartate, the first step in the de novo biosynthesis of NAD(+). The chain is L-aspartate oxidase from Acinetobacter baylyi (strain ATCC 33305 / BD413 / ADP1).